An 807-amino-acid polypeptide reads, in one-letter code: MSHLLPFPRRRLALACLLASISGASFGQTQCDVAQLQQSPDLATAISSADYACYSGWFSASSDTLNNIYSEASLSRVQVALHQAVQTYQGEAEQARAIENLGEYVRAAYYVRYNAGNVAAFSDLLGQQFAHTINAFLANPHALDQGREQVGAMKSLTLMVDNIKQLPLTMDAMMLALQQFNPETAKNTQWVDGLNNLFRSMAGHIANDAFYRYLASNTQHIDMLEKFANDNAWALDTDADFLVFNALRETGRLIASPDKATKQKAVQVMQRVMARYPLGSEHDKLWLAAVEMLSYFAPEALNGLDLPQAKRDLAARVLPNRHECQGPAIIRSQDLTPEQAAKACDVLAAKEADFHQVANTGMQPVADDHNQRVEVAVFANNDSYVDYSAFLFGNTTDNGGQYLEGNPADEHNTARFVAYRYANGEELSILNLEHEYTHYLDARFNQYGSFSDNLAHGYVVWWLEGFAEYMHYKQGYQAAIELIAQGKMSLSQVFATSYSHDTNRIYRWGYLAVRFMLENHPQEVEGLLALSRSGQFEQWAQQVQTLGQQYDGEFARWLDGLEVTPENPDTDPDTPTEPSDGVTQLQANQSITLSGKAYSEKLFYVDVPANTTHFSVAIEGDGDADLYMSYNQVAHYYDFEVSKFVDGSNEEIQFAADASGYVKPGRYYLSVTGRGRYQAVNLTATIDTAAPTPPTQEQDDLAPVMLQSGQAQHLTVHQQRYAAVYVPEGVSEVRIWLSDLTSSDSQGNVNLYASREHWPTPEQHQFASRYAGSNQYLAIPVEQAGYLHFSLNAPQQGDDVEMVVYFH.

The first 27 residues, 1 to 27 (MSHLLPFPRRRLALACLLASISGASFG), serve as a signal peptide directing secretion. Histidine 434 serves as a coordination point for Zn(2+). Glutamate 435 is an active-site residue. Histidine 438 is a Zn(2+) binding site. Residues 562-585 (EVTPENPDTDPDTPTEPSDGVTQL) form a disordered region.

It belongs to the peptidase M9A family. It depends on Zn(2+) as a cofactor.

Its subcellular location is the secreted. It carries out the reaction Digestion of native collagen in the triple helical region at Xaa-|-Gly bonds. With synthetic peptides, a preference is shown for Gly at P3 and P1', Pro and Ala at P2 and P2', and hydroxyproline, Ala or Arg at P3'.. Its function is as follows. Possesses gelatinolytic activity. This Vibrio vulnificus (strain CMCP6) protein is Microbial collagenase.